The primary structure comprises 251 residues: Homeobox protein notochord (251 aa).

Residues 1–14 (MPSPRPRGSPPPAP) show a composition bias toward pro residues. Residues 1 to 47 (MPSPRPRGSPPPAPSGSRVRPPRSGRSPAPRSPTGPNTPRAPGRFES) are disordered. Low complexity predominate over residues 15-35 (SGSRVRPPRSGRSPAPRSPTG). The homeobox DNA-binding region spans 156-215 (QKRVRTMFNLEQLEELEKVFAKQHNLVGKKRAQLAARLKLTENQVRVWFQNRRVKYQKQQ). Residues 224 to 242 (AEAASLDEPSSSSIASIQS) are compositionally biased toward low complexity. Positions 224–251 (AEAASLDEPSSSSIASIQSDDAESGVDG) are disordered.

It localises to the nucleus. Transcription regulator acting downstream of both FOXA2 and Brachyury (T) during notochord development. Required for node morphogenesis. Is essential for cilia formation in the posterior notochord (PNC) and for left-right patterning; acts upstream of FOXJ1 and RFX3 in this process and is required for the expression of various components important for axonemal assembly and function. Plays a role in regulating axial versus paraxial cell fate. Activates the transcription of ciliary proteins C11orf97 homolog, FAM183B and SPACA9 in the embryonic ventral node. The polypeptide is Homeobox protein notochord (NOTO) (Homo sapiens (Human)).